The sequence spans 175 residues: Ribosome maturation factor RimM (175 aa).

Residues 98 to 175 (EGEYYWHQLE…EMRVDWDADF (78 aa)) enclose the PRC barrel domain.

It belongs to the RimM family. Binds ribosomal protein uS19.

The protein localises to the cytoplasm. Its function is as follows. An accessory protein needed during the final step in the assembly of 30S ribosomal subunit, possibly for assembly of the head region. Essential for efficient processing of 16S rRNA. May be needed both before and after RbfA during the maturation of 16S rRNA. It has affinity for free ribosomal 30S subunits but not for 70S ribosomes. In Pseudomonas aeruginosa (strain UCBPP-PA14), this protein is Ribosome maturation factor RimM.